The chain runs to 396 residues: Tryptophan synthase beta chain (396 aa).

At Lys86 the chain carries N6-(pyridoxal phosphate)lysine.

It belongs to the TrpB family. As to quaternary structure, tetramer of two alpha and two beta chains. Pyridoxal 5'-phosphate serves as cofactor.

The catalysed reaction is (1S,2R)-1-C-(indol-3-yl)glycerol 3-phosphate + L-serine = D-glyceraldehyde 3-phosphate + L-tryptophan + H2O. Its pathway is amino-acid biosynthesis; L-tryptophan biosynthesis; L-tryptophan from chorismate: step 5/5. Functionally, the beta subunit is responsible for the synthesis of L-tryptophan from indole and L-serine. The sequence is that of Tryptophan synthase beta chain from Sodalis glossinidius (strain morsitans).